Reading from the N-terminus, the 687-residue chain is Ribosomal RNA processing protein 1 homolog (687 aa).

The segment covering 288–298 (DEEDDEVNAEE) has biased composition (acidic residues). 2 disordered regions span residues 288–312 (DEEDDEVNAEEEQPRATSLDPRAGN) and 463–624 (VKEA…GSGK). Basic and acidic residues-rich tracts occupy residues 463 to 488 (VKEAEPKSKKAKKEEPPQQNKDDQTK), 497 to 520 (PKNDQSKPKIEDQPTLKAEKEEPA), and 527 to 543 (HSKTKEEQSKPKTDEQP). A compositionally biased stretch (low complexity) spans 554–564 (KAKPTPKTKAA). The span at 596 to 608 (KQANSKLPQSTPK) shows a compositional bias: polar residues. Phosphothreonine is present on residues Thr617 and Thr620. Position 622 is a phosphoserine (Ser622).

Belongs to the RRP1 family.

It localises to the nucleus. Its function is as follows. May be involved in the generation of 28S rRNA. In Drosophila melanogaster (Fruit fly), this protein is Ribosomal RNA processing protein 1 homolog (Nnp-1).